A 332-amino-acid chain; its full sequence is 2,3-diketo-L-gulonate reductase (332 aa).

The Proton donor role is filled by H44. NAD(+) contacts are provided by residues 168–174 (ITMVDMS), 224–225 (WK), and 304–306 (GHE).

It belongs to the LDH2/MDH2 oxidoreductase family. DlgD subfamily. As to quaternary structure, homodimer.

Its subcellular location is the cytoplasm. The catalysed reaction is 3-dehydro-L-gulonate + NAD(+) = 2,3-dioxo-L-gulonate + NADH + H(+). It catalyses the reaction 3-dehydro-L-gulonate + NADP(+) = 2,3-dioxo-L-gulonate + NADPH + H(+). Its function is as follows. Catalyzes the reduction of 2,3-diketo-L-gulonate in the presence of NADH, to form 3-keto-L-gulonate. The protein is 2,3-diketo-L-gulonate reductase of Klebsiella pneumoniae (strain 342).